The sequence spans 199 residues: Thymidylate kinase (199 aa).

7–14 (GIDGSGKS) contacts ATP.

Belongs to the thymidylate kinase family.

It catalyses the reaction dTMP + ATP = dTDP + ADP. Functionally, phosphorylation of dTMP to form dTDP in both de novo and salvage pathways of dTTP synthesis. This is Thymidylate kinase from Neorickettsia sennetsu (strain ATCC VR-367 / Miyayama) (Ehrlichia sennetsu).